Consider the following 273-residue polypeptide: 4-diphosphocytidyl-2-C-methyl-D-erythritol kinase (273 aa).

The active site involves Lys-12. Residue 90 to 100 (PVASGIGGGSA) coordinates ATP. Residue Asp-122 is part of the active site.

The protein belongs to the GHMP kinase family. IspE subfamily.

The enzyme catalyses 4-CDP-2-C-methyl-D-erythritol + ATP = 4-CDP-2-C-methyl-D-erythritol 2-phosphate + ADP + H(+). It functions in the pathway isoprenoid biosynthesis; isopentenyl diphosphate biosynthesis via DXP pathway; isopentenyl diphosphate from 1-deoxy-D-xylulose 5-phosphate: step 3/6. Its function is as follows. Catalyzes the phosphorylation of the position 2 hydroxy group of 4-diphosphocytidyl-2C-methyl-D-erythritol. This chain is 4-diphosphocytidyl-2-C-methyl-D-erythritol kinase, found in Paracoccus denitrificans (strain Pd 1222).